Reading from the N-terminus, the 118-residue chain is UPF0102 protein Francci3_3586 (118 aa).

It belongs to the UPF0102 family.

This is UPF0102 protein Francci3_3586 from Frankia casuarinae (strain DSM 45818 / CECT 9043 / HFP020203 / CcI3).